The primary structure comprises 336 residues: uncharacterized protein (336 aa).

Positions 196-222 (YKEGDDSNWDDFGSESEDDSKEAHSEE) are disordered. The segment covering 201-215 (DSNWDDFGSESEDDS) has biased composition (acidic residues). Serine 211 is subject to Phosphoserine.

This is an uncharacterized protein from Schizosaccharomyces pombe (strain 972 / ATCC 24843) (Fission yeast).